The sequence spans 1161 residues: Mitogen-activated protein kinase kinase kinase (1161 aa).

The SH3 domain occupies 56 to 120 (GDGSLWTALY…PKDFVTDEDP (65 aa)). The Protein kinase domain occupies 142 to 402 (LDIKEVIGSG…KEILKQLESI (261 aa)). Residues 148–156 (IGSGGFCKV) and lysine 169 contribute to the ATP site. Aspartate 264 acts as the Proton acceptor in catalysis. A Phosphothreonine; by autocatalysis modification is found at threonine 300. Serine 304 carries the phosphoserine; by autocatalysis modification. 2 leucine-zipper regions span residues 426-447 (IAGVLHDLREKEKELRNKEEQL) and 461-482 (LKIREQNLRERERVLIERELVM). A phosphoserine mark is found at serine 525 and serine 560. Disordered stretches follow at residues 560–615 (SQLS…GSGG) and 658–678 (TTNNNNNNNNSISANNNNQLN). Positions 571-583 (AQTSTHSSFSKSA) are enriched in polar residues. The segment covering 591–601 (QQQNQQQVASL) has biased composition (low complexity). 3 positions are modified to phosphoserine: serine 685, serine 773, and serine 792. Residues 790–830 (GNSPAVGRKKHSLDSSSHHPPANGSNSFALPNQLTLPSEDN) form a disordered region. Residues 812 to 830 (NGSNSFALPNQLTLPSEDN) show a composition bias toward polar residues. Threonine 862 carries the post-translational modification Phosphothreonine. Disordered stretches follow at residues 988–1014 (RSASPSLSSSSTTASASPSIASTEAVN), 1045–1093 (EQRQ…SAGS), and 1137–1161 (GGSSRSLKRKGKKPQTQSCEQLERC). A compositionally biased stretch (low complexity) spans 989–1010 (SASPSLSSSSTTASASPSIAST). Serine 993 carries the post-translational modification Phosphoserine. Residues 1052-1063 (NQKKQRPKHITK) show a composition bias toward basic residues. The span at 1073–1086 (GQHHEHDDHNDPQH) shows a compositional bias: basic and acidic residues. Residues 1150–1161 (PQTQSCEQLERC) show a composition bias toward polar residues.

Belongs to the protein kinase superfamily. STE Ser/Thr protein kinase family. MAP kinase kinase kinase subfamily. In terms of assembly, homodimer. The cofactor is Mg(2+). In terms of processing, autophosphorylation on serine and threonine residues within the activation loop plays a role in enzyme activation. In terms of tissue distribution, expressed both maternally and zygotically. Expressed uniformly in large quantities in the early embryo (stages 1-4). In the late embryo, expression is ubiquitous, but expression levels are dramatically reduced. Expressed in the adult head and thorax, and in S2 cells.

It carries out the reaction L-seryl-[protein] + ATP = O-phospho-L-seryl-[protein] + ADP + H(+). The enzyme catalyses L-threonyl-[protein] + ATP = O-phospho-L-threonyl-[protein] + ADP + H(+). With respect to regulation, homodimerization via the leucine zipper domains is required for autophosphorylation and subsequent activation. Activated by C6-ceramide. Activates the JUN N-terminal pathway during dorsal closure. The protein is Mitogen-activated protein kinase kinase kinase of Drosophila melanogaster (Fruit fly).